The sequence spans 311 residues: Ribonuclease 3 (311 aa).

Positions 20 to 145 (YLCFYRILGF…FIGAIYLDQG (126 aa)) constitute an RNase III domain. Position 62 (E62) interacts with Mg(2+). D66 is an active-site residue. 2 residues coordinate Mg(2+): N131 and E134. E134 is a catalytic residue. One can recognise a DRBM domain in the interval 173–242 (NFKSKLIEWS…AQMAIKKVKD (70 aa)). The interval 250-311 (NEAKSQHSKP…EVEATETEKE (62 aa)) is disordered. A compositionally biased stretch (acidic residues) spans 262–288 (VETESVEPELTESETMEPDTLETEAPE).

It belongs to the ribonuclease III family. As to quaternary structure, homodimer. It depends on Mg(2+) as a cofactor.

The protein resides in the cytoplasm. It carries out the reaction Endonucleolytic cleavage to 5'-phosphomonoester.. Its function is as follows. Digests double-stranded RNA. Involved in the processing of primary rRNA transcript to yield the immediate precursors to the large and small rRNAs (23S and 16S). Processes some mRNAs, and tRNAs when they are encoded in the rRNA operon. Processes pre-crRNA and tracrRNA of type II CRISPR loci if present in the organism. This chain is Ribonuclease 3, found in Bacteroides thetaiotaomicron (strain ATCC 29148 / DSM 2079 / JCM 5827 / CCUG 10774 / NCTC 10582 / VPI-5482 / E50).